The sequence spans 345 residues: Probable deoxyhypusine synthase 2 (345 aa).

Lys292 functions as the Nucleophile in the catalytic mechanism.

The protein belongs to the deoxyhypusine synthase family. NAD(+) is required as a cofactor.

The catalysed reaction is [eIF5A protein]-L-lysine + spermidine = [eIF5A protein]-deoxyhypusine + propane-1,3-diamine. The protein operates within protein modification; eIF5A hypusination. Its function is as follows. Catalyzes the NAD-dependent oxidative cleavage of spermidine and the subsequent transfer of the butylamine moiety of spermidine to the epsilon-amino group of a specific lysine residue of the eIF-5A precursor protein to form the intermediate deoxyhypusine residue. In Methanosarcina mazei (strain ATCC BAA-159 / DSM 3647 / Goe1 / Go1 / JCM 11833 / OCM 88) (Methanosarcina frisia), this protein is Probable deoxyhypusine synthase 2 (dys2).